Reading from the N-terminus, the 81-residue chain is Kunitz-type serine protease inhibitor spermatin (81 aa).

Positions 1-24 (MSSGCLLLLLGLLTLWAELTPVSG) are cleaved as a signal peptide. The 51-residue stretch at 29 to 79 (CELPAESGLCNAYIPSFYYNPHSHKCQKFMYGGCGGNANNFKTIDECHRTC) folds into the BPTI/Kunitz inhibitor domain. Intrachain disulfides connect cysteine 29-cysteine 79, cysteine 38-cysteine 62, and cysteine 54-cysteine 75.

In terms of tissue distribution, expressed by the venom gland.

The protein resides in the secreted. Its function is as follows. Snake venom serine protease inhibitor. The protein is Kunitz-type serine protease inhibitor spermatin of Walterinnesia aegyptia (Desert black snake).